We begin with the raw amino-acid sequence, 113 residues long: MELPPNVQNQLMQFQQLQQQLQMIMYQKQQFETQLKEMEKAVEEMEKSTSDEVFKMAGGILVKRNKDEVKEELSEKMETMKLRVATFEKQEEKMQKRYAELQENLQKVIGQGH.

This sequence belongs to the prefoldin subunit beta family. As to quaternary structure, heterohexamer of two alpha and four beta subunits.

It localises to the cytoplasm. In terms of biological role, molecular chaperone capable of stabilizing a range of proteins. Seems to fulfill an ATP-independent, HSP70-like function in archaeal de novo protein folding. This chain is Prefoldin subunit beta, found in Methanococcus vannielii (strain ATCC 35089 / DSM 1224 / JCM 13029 / OCM 148 / SB).